The following is a 358-amino-acid chain: C-X-C chemokine receptor type 4 (358 aa).

An important for chemokine binding and signaling region spans residues 1-25 (MDGFSGGIDINIFDSNSTENGSGDF). At 1–44 (MDGFSGGIDINIFDSNSTENGSGDFEDFSEPCFMHDNSDFNRIF) the chain is on the extracellular side. Residues Asn16 and Asn20 are each glycosylated (N-linked (GlcNAc...) asparagine). 2 disulfide bridges follow: Cys32–Cys281 and Cys113–Cys190. Residues 45–67 (LPTIYSFIFLLGIIGNGLVVVVM) traverse the membrane as a helical segment. Residues 68–81 (GYQKKSRTMTDKYR) are Cytoplasmic-facing. Residues 82-103 (LHLSVADLLFVFTLPFWSVDAA) traverse the membrane as a helical segment. The chemokine binding stretch occupies residues 98 to 101 (WSVD). At 104-114 (IGWYFKEFLCK) the chain is on the extracellular side. Residues 115-134 (AVHVIYTVNLYSSVLILAFI) form a helical membrane-spanning segment. A chemokine binding region spans residues 117 to 121 (HVIYT). At 135 to 158 (SLDRYLAIVHATNSQGSRKMLADK) the chain is on the cytoplasmic side. Residues 139–151 (YLAIVHATNSQGS) are involved in dimerization; when bound to chemokine. Residues 159–178 (VVYAGVWLPALLLTVPDLVF) form a helical membrane-spanning segment. The Extracellular segment spans residues 179–202 (ARVSDENGQFVCDRIYPIDNRETW). The segment at 190 to 194 (CDRIY) is chemokine binding, important for signaling. A helical transmembrane segment spans residues 203–223 (TVGFRFLHITVGLILPGLIIL). At 224–248 (ICYCVIISKLSHSKGHQKRKALKTT) the chain is on the cytoplasmic side. A helical transmembrane segment spans residues 249–268 (VILILAFFACWLPYYVCLTT). The Extracellular segment spans residues 269–289 (DTFMLLGLLKADCIWENTLHK). The chain crosses the membrane as a helical span at residues 290–309 (AISITEALAFFHCCLNPILY). Over 310–358 (AFLGAKFKTSAQNAFTSVSRGSSLKILSKKRAGLSSVSTESESSSFHSS) the chain is Cytoplasmic. The interval 338 to 358 (KKRAGLSSVSTESESSSFHSS) is disordered. A compositionally biased stretch (low complexity) spans 344–358 (SSVSTESESSSFHSS).

This sequence belongs to the G-protein coupled receptor 1 family. Monomer. Can form dimers. In terms of processing, sulfation is required for efficient binding of cxcl12/sdf-1alpha and promotes its dimerization. Post-translationally, O- and N-glycosylated.

The protein resides in the cell membrane. It is found in the cytoplasm. The protein localises to the nucleus. Its subcellular location is the early endosome. It localises to the late endosome. The protein resides in the lysosome. Functionally, receptor for the C-X-C chemokine cxcl12/sdf-1. Transduces a signal by increasing the intracellular calcium ion level. Signaling with cxcl12/sdf-1 mediates the directional movement of mesodermal cells during gastrulation. May play a role in the migration of embryonic presumptive primordial germ cells (pPGCs). May also be involved in regulating migration of hematopoietic stem cells into the larval liver. In Xenopus tropicalis (Western clawed frog), this protein is C-X-C chemokine receptor type 4.